We begin with the raw amino-acid sequence, 67 residues long: DNA-directed RNA polymerase subunit omega (67 aa).

It belongs to the RNA polymerase subunit omega family. The RNAP catalytic core consists of 2 alpha, 1 beta, 1 beta' and 1 omega subunit. When a sigma factor is associated with the core the holoenzyme is formed, which can initiate transcription.

The catalysed reaction is RNA(n) + a ribonucleoside 5'-triphosphate = RNA(n+1) + diphosphate. Its function is as follows. Promotes RNA polymerase assembly. Latches the N- and C-terminal regions of the beta' subunit thereby facilitating its interaction with the beta and alpha subunits. The sequence is that of DNA-directed RNA polymerase subunit omega from Bordetella avium (strain 197N).